Consider the following 739-residue polypeptide: Nucleoprotein (739 aa).

Positions 334–363 form a coiled coil; sequence VNVGEQYQQLREAATEAEKQLQQYAESREL. Disordered regions lie at residues 414 to 475 and 498 to 642; these read RPNL…YHDD and FELQ…IGQS. Over residues 570-579 the composition is skewed to acidic residues; that stretch reads TPIDQGDDDP. Over residues 614-624 the composition is skewed to basic and acidic residues; the sequence is AEAHEPPHKSS. Residues 625–634 show a composition bias toward polar residues; the sequence is NEPAETSQLN.

The protein belongs to the filoviruses nucleoprotein family. In terms of assembly, homooligomer. Homomultimerizes to form the nucleocapsid. Binds to viral genomic RNA. Interacts with VP35 and VP30 to form the nucleocapsid. Interacts with host PPP2R5C; this interaction leads to VP30 dephosphorylation and viral transcription. Interacts with VP24; this interaction facilitates nucleocapsid assembly and genome packaging. Interacts with matrix protein VP40; this interaction allows recruitment of the nucleocapsid into progeny virions. Interacts with host STAU1. Interacts with host NXF1 (via RNA-binding domain); this interaction recruits NXF1 to the inclusion bodies were viral replication takes place, probably to export viral mRNA-NXF1 complexes from these sites. Interacts with host CCDC92; this interaction sequesters NP in the host cytoplasm. Interacts with host TRIM14. Post-translationally, phosphorylated and O-glycosylated by host. Acetylated by host EP300 in vitro.

It localises to the virion. The protein resides in the host cytoplasm. Oligomerizes into helical capsid to encapsidate the viral genome, protecting it from nucleases and the cellular innate immune response. VP35 binds to and stabilizes monomeric NP, keeping it soluble. Upon virus replication, NP is recruited to bind cooperatively viral genomic RNA and VP35 is released. The encapsidated genomic RNA is termed the nucleocapsid and serves as template for transcription and replication. The nucleocapsid is helical with a pitch of 10.81 NP per turn and a diameter of about 22nm. Each NP binds to six nucleotides of viral genomic RNA, three being exposed to the solvant and three hidden into the nucleocapsid. Also recruits host PPP2R5C phosphatase to dephosphorylate VP30 and thereby promote viral transcription. Upon virion assembly and budding, NP binds to VP24 and possibly host STAU1. The sequence is that of Nucleoprotein (NP) from Homo sapiens (Human).